We begin with the raw amino-acid sequence, 344 residues long: WW domain binding protein 1-like (344 aa).

Residues leucine 42–histidine 62 form a helical membrane-spanning segment. Disordered regions lie at residues leucine 132–glycine 250 and cysteine 302–proline 321. Residues proline 145–serine 173 show a composition bias toward low complexity. At serine 173 the chain carries Phosphoserine. A compositionally biased stretch (basic and acidic residues) spans leucine 212–serine 228.

It localises to the membrane. The protein is WW domain binding protein 1-like (Wbp1l) of Rattus norvegicus (Rat).